A 431-amino-acid polypeptide reads, in one-letter code: 5-methylthioadenosine/S-adenosylhomocysteine deaminase (431 aa).

Positions 68 and 70 each coordinate Zn(2+). Residues E97 and H186 each contribute to the substrate site. Zn(2+) is bound at residue H213. Substrate contacts are provided by E216 and D301. D301 contributes to the Zn(2+) binding site.

Belongs to the metallo-dependent hydrolases superfamily. MTA/SAH deaminase family. Zn(2+) serves as cofactor.

It catalyses the reaction S-adenosyl-L-homocysteine + H2O + H(+) = S-inosyl-L-homocysteine + NH4(+). The catalysed reaction is S-methyl-5'-thioadenosine + H2O + H(+) = S-methyl-5'-thioinosine + NH4(+). Its function is as follows. Catalyzes the deamination of 5-methylthioadenosine and S-adenosyl-L-homocysteine into 5-methylthioinosine and S-inosyl-L-homocysteine, respectively. Is also able to deaminate adenosine. In Halothermothrix orenii (strain H 168 / OCM 544 / DSM 9562), this protein is 5-methylthioadenosine/S-adenosylhomocysteine deaminase.